Consider the following 488-residue polypeptide: Ribulose bisphosphate carboxylase large chain (488 aa).

Substrate contacts are provided by Asn-127 and Thr-177. The active-site Proton acceptor is the Lys-179. A substrate-binding site is contributed by Lys-181. Positions 205, 207, and 208 each coordinate Mg(2+). Lys-205 is modified (N6-carboxylysine). The Proton acceptor role is filled by His-297. Substrate contacts are provided by Arg-298, His-330, and Ser-382.

It belongs to the RuBisCO large chain family. Type I subfamily. Heterohexadecamer of 8 large chains and 8 small chains. The cofactor is Mg(2+).

It localises to the plastid. The protein localises to the chloroplast. The catalysed reaction is 2 (2R)-3-phosphoglycerate + 2 H(+) = D-ribulose 1,5-bisphosphate + CO2 + H2O. It catalyses the reaction D-ribulose 1,5-bisphosphate + O2 = 2-phosphoglycolate + (2R)-3-phosphoglycerate + 2 H(+). In terms of biological role, ruBisCO catalyzes two reactions: the carboxylation of D-ribulose 1,5-bisphosphate, the primary event in carbon dioxide fixation, as well as the oxidative fragmentation of the pentose substrate in the photorespiration process. Both reactions occur simultaneously and in competition at the same active site. The protein is Ribulose bisphosphate carboxylase large chain of Emiliania huxleyi (Coccolithophore).